The primary structure comprises 132 residues: Small ribosomal subunit protein uS8 (132 aa).

Belongs to the universal ribosomal protein uS8 family. As to quaternary structure, part of the 30S ribosomal subunit. Contacts proteins S5 and S12.

In terms of biological role, one of the primary rRNA binding proteins, it binds directly to 16S rRNA central domain where it helps coordinate assembly of the platform of the 30S subunit. In Francisella philomiragia subsp. philomiragia (strain ATCC 25017 / CCUG 19701 / FSC 153 / O#319-036), this protein is Small ribosomal subunit protein uS8.